The following is a 748-amino-acid chain: Wings apart-like protein homolog 1 (748 aa).

Disordered stretches follow at residues 23-199 (TLAQ…VYAT) and 614-644 (EGGCGDEEEEEEGGDESSDEDGVRKDGRLDR). Residues 35–64 (PSVRSSDSPDVPDTPDVPVNQLSSPPLSLP) are compositionally biased toward low complexity. Polar residues-rich tracts occupy residues 68-79 (SEGNAETLQNLS) and 87-96 (LSQSSTSSLN). Low complexity predominate over residues 172-182 (ISSSSNRYSSR). The WAPL domain occupies 205–723 (KPLASGYGSR…KRLYDFTKAT (519 aa)). Positions 616 to 633 (GCGDEEEEEEGGDESSDE) are enriched in acidic residues. Basic and acidic residues predominate over residues 634-644 (DGVRKDGRLDR).

It belongs to the WAPL family.

The protein localises to the nucleus. Regulator of meiotic chromosome structure and function, playing a role in sister chromatid cohesion, possibly via antagonizing the coh-3/-4 association with axial elements in nuclei during late prophase, cohesin association with chromatin, DNA double strand break repair and polar body positioning following meiotic divisions during oogenesis. Regulates the morphogenesis and temporal assembly of axial elements to control the organization of meiotic chromosomes in pachytene nuclei and is also involved in meiotic chromosomal remodeling in late pachytene nuclei. Required for the removal of the cohesin component scc-1 from mitotic chromosomes. The sequence is that of Wings apart-like protein homolog 1 from Caenorhabditis elegans.